The chain runs to 155 residues: Protein E6 (155 aa).

2 zinc fingers span residues 33 to 69 (CVYCKKELTSLELYRFACIELKLVYRNNWPYAVCRVC) and 106 to 142 (CYRCQCPLTPEEKQLHCEHKRRFHYIAYAWTGSCLQC).

The protein belongs to the papillomaviridae E6 protein family. In terms of assembly, forms homodimers. Interacts with ubiquitin-protein ligase UBE3A/E6-AP; this interaction stimulates UBE3A ubiquitin activity. Interacts with host TP53 and EP300; this interaction inhibits TP53 activity.

Its subcellular location is the host cytoplasm. The protein resides in the host nucleus. Plays a major role in the induction and maintenance of cellular transformation. E6 associates with host UBE3A/E6-AP ubiquitin-protein ligase and modulates its activity. Sequesters tumor suppressor TP53 in the host cytoplasm and modulates its activity by interacting with host EP300 that results in the reduction of TP53 acetylation and activation. In turn, apoptosis induced by DNA damage is inhibited. E6 also protects host keratinocytes from apoptosis by mediating the degradation of host BAK1. May also inhibit host immune response. The chain is Protein E6 from Homo sapiens (Human).